The following is a 379-amino-acid chain: Cytochrome b (379 aa).

4 helical membrane passes run 33 to 53, 77 to 98, 113 to 133, and 178 to 198; these read FGSL…FLAM, WMIR…FMHV, WNIG…GYVL, and FFAF…VHLL. Heme b is bound by residues H83 and H97. Heme b contacts are provided by H182 and H196. H201 provides a ligand contact to a ubiquinone. 4 helical membrane-spanning segments follow: residues 226–246, 288–308, 320–340, and 347–367; these read IKDI…VLFS, LGGV…PMLH, LSQC…WIGG, and FITI…XLMP.

It belongs to the cytochrome b family. The cytochrome bc1 complex contains 11 subunits: 3 respiratory subunits (MT-CYB, CYC1 and UQCRFS1), 2 core proteins (UQCRC1 and UQCRC2) and 6 low-molecular weight proteins (UQCRH/QCR6, UQCRB/QCR7, UQCRQ/QCR8, UQCR10/QCR9, UQCR11/QCR10 and a cleavage product of UQCRFS1). This cytochrome bc1 complex then forms a dimer. Heme b is required as a cofactor.

The protein localises to the mitochondrion inner membrane. Component of the ubiquinol-cytochrome c reductase complex (complex III or cytochrome b-c1 complex) that is part of the mitochondrial respiratory chain. The b-c1 complex mediates electron transfer from ubiquinol to cytochrome c. Contributes to the generation of a proton gradient across the mitochondrial membrane that is then used for ATP synthesis. The chain is Cytochrome b (MT-CYB) from Chrotogale owstoni (Owston's palm civet).